A 242-amino-acid chain; its full sequence is Pyridoxine 5'-phosphate synthase (242 aa).

Residue Asn6 participates in 3-amino-2-oxopropyl phosphate binding. 8-9 (DH) contacts 1-deoxy-D-xylulose 5-phosphate. 3-amino-2-oxopropyl phosphate is bound at residue Arg17. His42 functions as the Proton acceptor in the catalytic mechanism. Residues Arg44 and His49 each contribute to the 1-deoxy-D-xylulose 5-phosphate site. Catalysis depends on Glu69, which acts as the Proton acceptor. Thr99 serves as a coordination point for 1-deoxy-D-xylulose 5-phosphate. The active-site Proton donor is His190. 3-amino-2-oxopropyl phosphate-binding positions include Gly191 and 212 to 213 (GH).

Belongs to the PNP synthase family. Homooctamer; tetramer of dimers.

It is found in the cytoplasm. The catalysed reaction is 3-amino-2-oxopropyl phosphate + 1-deoxy-D-xylulose 5-phosphate = pyridoxine 5'-phosphate + phosphate + 2 H2O + H(+). It functions in the pathway cofactor biosynthesis; pyridoxine 5'-phosphate biosynthesis; pyridoxine 5'-phosphate from D-erythrose 4-phosphate: step 5/5. Its function is as follows. Catalyzes the complicated ring closure reaction between the two acyclic compounds 1-deoxy-D-xylulose-5-phosphate (DXP) and 3-amino-2-oxopropyl phosphate (1-amino-acetone-3-phosphate or AAP) to form pyridoxine 5'-phosphate (PNP) and inorganic phosphate. The protein is Pyridoxine 5'-phosphate synthase of Neisseria meningitidis serogroup A / serotype 4A (strain DSM 15465 / Z2491).